The following is an 882-amino-acid chain: Valine--tRNA ligase (882 aa).

The short motif at 45 to 55 (PNVTGKLHLGH) is the 'HIGH' region element. The 'KMSKS' region signature appears at 519 to 523 (KMSKS). Lys522 serves as a coordination point for ATP. Residues 808–882 (LADLLNVEEE…RIAEMKKIKS (75 aa)) are a coiled coil.

Belongs to the class-I aminoacyl-tRNA synthetase family. ValS type 1 subfamily. Monomer.

It localises to the cytoplasm. The catalysed reaction is tRNA(Val) + L-valine + ATP = L-valyl-tRNA(Val) + AMP + diphosphate. Its function is as follows. Catalyzes the attachment of valine to tRNA(Val). As ValRS can inadvertently accommodate and process structurally similar amino acids such as threonine, to avoid such errors, it has a 'posttransfer' editing activity that hydrolyzes mischarged Thr-tRNA(Val) in a tRNA-dependent manner. The chain is Valine--tRNA ligase from Streptococcus pyogenes serotype M28 (strain MGAS6180).